We begin with the raw amino-acid sequence, 173 residues long: NADH-quinone oxidoreductase subunit I 1 (173 aa).

2 consecutive 4Fe-4S ferredoxin-type domains span residues 41 to 73 (IVLT…LAKA) and 83 to 112 (EHFR…LTPD). Residues C53, C56, C59, C63, C92, C95, C98, and C102 each coordinate [4Fe-4S] cluster.

This sequence belongs to the complex I 23 kDa subunit family. NDH-1 is composed of 14 different subunits. Subunits NuoA, H, J, K, L, M, N constitute the membrane sector of the complex. [4Fe-4S] cluster serves as cofactor.

The protein resides in the cell inner membrane. It carries out the reaction a quinone + NADH + 5 H(+)(in) = a quinol + NAD(+) + 4 H(+)(out). In terms of biological role, NDH-1 shuttles electrons from NADH, via FMN and iron-sulfur (Fe-S) centers, to quinones in the respiratory chain. The immediate electron acceptor for the enzyme in this species is believed to be ubiquinone. Couples the redox reaction to proton translocation (for every two electrons transferred, four hydrogen ions are translocated across the cytoplasmic membrane), and thus conserves the redox energy in a proton gradient. This Rhodopseudomonas palustris (strain BisA53) protein is NADH-quinone oxidoreductase subunit I 1.